The sequence spans 62 residues: uncharacterized protein (62 aa).

Positions 1 to 18 are enriched in polar residues; that stretch reads MTTNRVDPLEQTSPNTPT. Residues 1 to 24 are disordered; that stretch reads MTTNRVDPLEQTSPNTPTSKREKA.

This is an uncharacterized protein from Rickettsia conorii (strain ATCC VR-613 / Malish 7).